A 506-amino-acid chain; its full sequence is DEAD-box ATP-dependent RNA helicase CshA (506 aa).

The Q motif signature appears at 2–30 (QNFKELGISDNTVQSLESMGFKEPTPIQK). The Helicase ATP-binding domain occupies 33–203 (IPYALQGIDI…QQFMKSPKII (171 aa)). 46 to 53 (AQTGTGKT) is an ATP binding site. The DEAD box motif lies at 150-153 (DEAD). Residues 214 to 375 (QIEEFYTIVK…LRPPHRKEVL (162 aa)) enclose the Helicase C-terminal domain. The disordered stretch occupies residues 436 to 506 (EKPLSRKGRN…KGRTFADHQK (71 aa)). Residues 468-480 (KRSKGYSSKKKST) show a composition bias toward basic residues.

The protein belongs to the DEAD box helicase family. CshA subfamily. In terms of assembly, oligomerizes, may be a member of the RNA degradosome.

Its subcellular location is the cytoplasm. The enzyme catalyses ATP + H2O = ADP + phosphate + H(+). DEAD-box RNA helicase possibly involved in RNA degradation. Unwinds dsRNA in both 5'- and 3'-directions, has RNA-dependent ATPase activity. In Staphylococcus aureus (strain bovine RF122 / ET3-1), this protein is DEAD-box ATP-dependent RNA helicase CshA.